The chain runs to 270 residues: Feruloyl esterase C (270 aa).

The first 21 residues, 1 to 21 (MLRAVLLPTLLAFGAFTPVHG), serve as a signal peptide directing secretion.

It belongs to the faeC family.

The protein localises to the secreted. It catalyses the reaction feruloyl-polysaccharide + H2O = ferulate + polysaccharide.. Functionally, involved in degradation of plant cell walls. Hydrolyzes the feruloyl-arabinose ester bond in arabinoxylans, and the feruloyl-galactose ester bond in pectin. Active against paranitrophenyl-acetate, methyl ferulate and wheat arabinoxylan. The sequence is that of Feruloyl esterase C (faeC) from Emericella nidulans (strain FGSC A4 / ATCC 38163 / CBS 112.46 / NRRL 194 / M139) (Aspergillus nidulans).